Here is a 506-residue protein sequence, read N- to C-terminus: Maturase K (506 aa).

The protein belongs to the intron maturase 2 family. MatK subfamily.

Its subcellular location is the plastid. The protein localises to the chloroplast. Functionally, usually encoded in the trnK tRNA gene intron. Probably assists in splicing its own and other chloroplast group II introns. The sequence is that of Maturase K from Andromeda polifolia (Bog rosemary).